Reading from the N-terminus, the 1517-residue chain is DNA-directed RNA polymerase subunit beta' (1517 aa).

Residues Cys-71, Cys-73, Cys-86, and Cys-89 each contribute to the Zn(2+) site. Asp-482, Asp-484, and Asp-486 together coordinate Mg(2+). 4 residues coordinate Zn(2+): Cys-812, Cys-886, Cys-893, and Cys-896.

The protein belongs to the RNA polymerase beta' chain family. As to quaternary structure, the RNAP catalytic core consists of 2 alpha, 1 beta, 1 beta' and 1 omega subunit. When a sigma factor is associated with the core the holoenzyme is formed, which can initiate transcription. Mg(2+) serves as cofactor. Requires Zn(2+) as cofactor.

The enzyme catalyses RNA(n) + a ribonucleoside 5'-triphosphate = RNA(n+1) + diphosphate. Its function is as follows. DNA-dependent RNA polymerase catalyzes the transcription of DNA into RNA using the four ribonucleoside triphosphates as substrates. This Campylobacter jejuni subsp. jejuni serotype O:2 (strain ATCC 700819 / NCTC 11168) protein is DNA-directed RNA polymerase subunit beta'.